A 59-amino-acid polypeptide reads, in one-letter code: Large ribosomal subunit protein uL30 (59 aa).

It belongs to the universal ribosomal protein uL30 family. Part of the 50S ribosomal subunit.

This chain is Large ribosomal subunit protein uL30, found in Proteus mirabilis (strain HI4320).